Reading from the N-terminus, the 113-residue chain is Na(+)/H(+) antiporter subunit C1 (113 aa).

A run of 3 helical transmembrane segments spans residues 1–21 (MEII…YLVL), 28–48 (IVMG…TMGG), and 72–92 (LILT…VLAF).

It belongs to the CPA3 antiporters (TC 2.A.63) subunit C family. In terms of assembly, may form a heterooligomeric complex that consists of seven subunits: mnhA1, mnhB1, mnhC1, mnhD1, mnhE1, mnhF1 and mnhG1.

Its subcellular location is the cell membrane. Mnh complex is a Na(+)/H(+) antiporter involved in Na(+) excretion. This chain is Na(+)/H(+) antiporter subunit C1 (mnhC1), found in Staphylococcus aureus (strain JH1).